A 507-amino-acid polypeptide reads, in one-letter code: Histidine ammonia-lyase (507 aa).

Positions 141 to 143 (ASG) form a cross-link, 5-imidazolinone (Ala-Gly). Serine 142 carries the post-translational modification 2,3-didehydroalanine (Ser).

Belongs to the PAL/histidase family. Contains an active site 4-methylidene-imidazol-5-one (MIO), which is formed autocatalytically by cyclization and dehydration of residues Ala-Ser-Gly.

The protein resides in the cytoplasm. It carries out the reaction L-histidine = trans-urocanate + NH4(+). Its pathway is amino-acid degradation; L-histidine degradation into L-glutamate; N-formimidoyl-L-glutamate from L-histidine: step 1/3. The chain is Histidine ammonia-lyase from Cereibacter sphaeroides (strain ATCC 17029 / ATH 2.4.9) (Rhodobacter sphaeroides).